A 267-amino-acid chain; its full sequence is Glutamate racemase (267 aa).

Residues 9 to 10 and 41 to 42 each bind substrate; these read DS and YS. Cys73 (proton donor/acceptor) is an active-site residue. 74–75 lines the substrate pocket; sequence NT. Catalysis depends on Cys184, which acts as the Proton donor/acceptor. A substrate-binding site is contributed by 185–186; sequence TH.

The protein belongs to the aspartate/glutamate racemases family.

The enzyme catalyses L-glutamate = D-glutamate. The protein operates within cell wall biogenesis; peptidoglycan biosynthesis. Provides the (R)-glutamate required for cell wall biosynthesis. In Actinobacillus pleuropneumoniae serotype 7 (strain AP76), this protein is Glutamate racemase.